The primary structure comprises 268 residues: Undecaprenyl-diphosphatase (268 aa).

A run of 8 helical transmembrane segments spans residues 4-24 (STTLVALVLGLLEGLTEFIPV), 50-70 (IQLGAVLAVLTVYAAKLVSVI), 84-104 (VAVLVAFLPAVVIGVLAHGFI), 109-129 (FETPILIATMLILGGIVLLFV), 144-164 (LPLNVALKIGFIQCLAMVPGV), 185-205 (AEFSFFLSMPTMAGAFAFDLF), 214-234 (SALGEIAVGFVAAFVAAVLVV), and 247-267 (ALFGWWRIAVGSVALAALLAG).

Belongs to the UppP family.

It is found in the cell inner membrane. The catalysed reaction is di-trans,octa-cis-undecaprenyl diphosphate + H2O = di-trans,octa-cis-undecaprenyl phosphate + phosphate + H(+). Functionally, catalyzes the dephosphorylation of undecaprenyl diphosphate (UPP). Confers resistance to bacitracin. The sequence is that of Undecaprenyl-diphosphatase from Cereibacter sphaeroides (strain ATCC 17029 / ATH 2.4.9) (Rhodobacter sphaeroides).